Here is a 449-residue protein sequence, read N- to C-terminus: Bifunctional protein GlmU (449 aa).

The pyrophosphorylase stretch occupies residues 1-226 (MNNIHAIILA…KFEVLGVNDK (226 aa)). Residues 9-12 (LAAG), lysine 23, glutamine 73, 78-79 (GT), 100-102 (YGD), glycine 137, glutamate 151, asparagine 166, and asparagine 224 contribute to the UDP-N-acetyl-alpha-D-glucosamine site. Aspartate 102 lines the Mg(2+) pocket. Asparagine 224 lines the Mg(2+) pocket. The tract at residues 227 to 247 (VQLAELERLFQKDQAIQFMKQ) is linker. Positions 248–449 (GLGLKDPTRF…QKNLKYRSKK (202 aa)) are N-acetyltransferase. 2 residues coordinate UDP-N-acetyl-alpha-D-glucosamine: arginine 330 and lysine 348. Histidine 360 acts as the Proton acceptor in catalysis. UDP-N-acetyl-alpha-D-glucosamine-binding residues include tyrosine 363 and asparagine 374. Acetyl-CoA contacts are provided by residues alanine 377, 383–384 (NY), serine 402, alanine 420, and arginine 437.

This sequence in the N-terminal section; belongs to the N-acetylglucosamine-1-phosphate uridyltransferase family. It in the C-terminal section; belongs to the transferase hexapeptide repeat family. As to quaternary structure, homotrimer. The cofactor is Mg(2+).

It localises to the cytoplasm. The enzyme catalyses alpha-D-glucosamine 1-phosphate + acetyl-CoA = N-acetyl-alpha-D-glucosamine 1-phosphate + CoA + H(+). The catalysed reaction is N-acetyl-alpha-D-glucosamine 1-phosphate + UTP + H(+) = UDP-N-acetyl-alpha-D-glucosamine + diphosphate. It functions in the pathway nucleotide-sugar biosynthesis; UDP-N-acetyl-alpha-D-glucosamine biosynthesis; N-acetyl-alpha-D-glucosamine 1-phosphate from alpha-D-glucosamine 6-phosphate (route II): step 2/2. Its pathway is nucleotide-sugar biosynthesis; UDP-N-acetyl-alpha-D-glucosamine biosynthesis; UDP-N-acetyl-alpha-D-glucosamine from N-acetyl-alpha-D-glucosamine 1-phosphate: step 1/1. The protein operates within bacterial outer membrane biogenesis; LPS lipid A biosynthesis. Functionally, catalyzes the last two sequential reactions in the de novo biosynthetic pathway for UDP-N-acetylglucosamine (UDP-GlcNAc). The C-terminal domain catalyzes the transfer of acetyl group from acetyl coenzyme A to glucosamine-1-phosphate (GlcN-1-P) to produce N-acetylglucosamine-1-phosphate (GlcNAc-1-P), which is converted into UDP-GlcNAc by the transfer of uridine 5-monophosphate (from uridine 5-triphosphate), a reaction catalyzed by the N-terminal domain. This chain is Bifunctional protein GlmU, found in Vesicomyosocius okutanii subsp. Calyptogena okutanii (strain HA).